The chain runs to 215 residues: Protein LURP-one-related 16 (215 aa).

A lipid anchor (N-myristoyl glycine) is attached at G2.

It belongs to the LOR family.

In terms of biological role, might be related to the phospholipid scramblase and tubby-like superfamily of membrane tethered transcription factors. The sequence is that of Protein LURP-one-related 16 from Arabidopsis thaliana (Mouse-ear cress).